A 430-amino-acid polypeptide reads, in one-letter code: Keratin, type I cytoskeletal 18 (430 aa).

S2 is subject to N-acetylserine. The tract at residues 2-79 (SFTTRSTFST…GLAGMGGIQN (78 aa)) is head. S7, S10, S15, and S18 each carry phosphoserine. 2 positions are modified to phosphoserine; alternate: S30 and S31. O-linked (GlcNAc) serine; alternate glycans are attached at residues S30 and S31. S34 carries the phosphoserine; by CDK1 modification. At Y36 the chain carries Phosphotyrosine. Position 42 is a phosphoserine (S42). Omega-N-methylarginine is present on R45. Position 49 is a phosphoserine; alternate (S49). The O-linked (GlcNAc) serine; alternate glycan is linked to S49. S51 is subject to Phosphoserine; by MAPKAPK2 and MAPKAPK3. T52 carries the phosphothreonine modification. S53 carries the post-translational modification Phosphoserine; by CAMK, PKC/PRKCE and AURKA. R55 bears the Omega-N-methylarginine mark. Residue S60 is modified to Phosphoserine. T65 bears the Phosphothreonine mark. The interval 70–373 (GLAGMGGIQN…EALLNIKVKL (304 aa)) is necessary for interaction with PNN. Residues 77–128 (IQNEKETMQSLNDRLASYLDRVRSLETENRRLESKIREHLEKKGPQVRDWSH) form an interaction with TRADD region. Residues 80-115 (EKETMQSLNDRLASYLDRVRSLETENRRLESKIREH) form a coil 1A region. The IF rod domain occupies 80 to 391 (EKETMQSLND…RLLEDGEDFN (312 aa)). Residue K81 forms a Glycyl lysine isopeptide (Lys-Gly) (interchain with G-Cter in SUMO2) linkage. A phosphoserine mark is found at S93 and S100. The linker 1 stretch occupies residues 116 to 132 (LEKKGPQVRDWSHYFKI). Residue K131 is modified to N6-acetyllysine. Positions 133-224 (IEDLRAQIFA…KNHEEEVKGL (92 aa)) are coil 1B. Residue S177 is modified to Phosphoserine. A linker 12 region spans residues 225 to 248 (QAQIASSGLTVEVDAPKSQDLAKI). Residues 243-391 (QDLAKIMADI…RLLEDGEDFN (149 aa)) form an interaction with DNAJB6 region. K247 is covalently cross-linked (Glycyl lysine isopeptide (Lys-Gly) (interchain with G-Cter in SUMO2)). Residues 249 to 387 (MADIRAQYDE…ATYRRLLEDG (139 aa)) form a coil 2 region. T302 carries the phosphothreonine modification. Phosphoserine is present on residues S305, S319, and S323. Glycyl lysine isopeptide (Lys-Gly) (interchain with G-Cter in SUMO2) cross-links involve residues K370 and K372. The interval 388-430 (EDFNLGDALDSSNSMQTIQKTTTRRIVDGKVVSETNDTKVLRH) is tail. Phosphoserine is present on residues S398, S399, and S401. The residue at position 404 (T404) is a Phosphothreonine. K417 is covalently cross-linked (Glycyl lysine isopeptide (Lys-Gly) (interchain with G-Cter in SUMO2)). K426 bears the N6-acetyllysine; alternate mark. K426 is covalently cross-linked (Glycyl lysine isopeptide (Lys-Gly) (interchain with G-Cter in SUMO1); alternate). K426 is covalently cross-linked (Glycyl lysine isopeptide (Lys-Gly) (interchain with G-Cter in SUMO2); alternate).

Belongs to the intermediate filament family. In terms of assembly, heterotetramer of two type I and two type II keratins. KRT18 associates with KRT8. Interacts with PLEC isoform 1C, when in a heterodimer with KRT8. Interacts with the thrombin-antithrombin complex. Interacts with PNN and mutated CFTR. Interacts with YWHAE, YWHAH and YWHAZ only when phosphorylated. Interacts with DNAJB6, TCHP and TRADD. Interacts with FAM83H. Interacts with EPPK1. Interacts with PKP1 and PKP2. As to quaternary structure, (Microbial infection) Interacts with hepatitis C virus/HCV core protein. Post-translationally, phosphorylation at Ser-34 increases during mitosis. Hyperphosphorylated at Ser-53 in diseased cirrhosis liver. Phosphorylation increases by IL-6. Proteolytically cleaved by caspases during epithelial cell apoptosis. Cleavage occurs at Asp-238 by either caspase-3, caspase-6 or caspase-7. In terms of processing, O-GlcNAcylation increases solubility, and decreases stability by inducing proteasomal degradation. As to expression, expressed in colon, placenta, liver and very weakly in exocervix. Increased expression observed in lymph nodes of breast carcinoma.

The protein resides in the nucleus matrix. It is found in the cytoplasm. Its subcellular location is the perinuclear region. It localises to the nucleus. The protein localises to the nucleolus. In terms of biological role, involved in the uptake of thrombin-antithrombin complexes by hepatic cells. When phosphorylated, plays a role in filament reorganization. Involved in the delivery of mutated CFTR to the plasma membrane. Together with KRT8, is involved in interleukin-6 (IL-6)-mediated barrier protection. The chain is Keratin, type I cytoskeletal 18 (KRT18) from Homo sapiens (Human).